Here is a 513-residue protein sequence, read N- to C-terminus: Cytochrome P450 monooxygenase sthF (513 aa).

2 consecutive transmembrane segments (helical) span residues 13–33 (FPSLHRIIISTFALIAAYIFI) and 212–232 (MLHPWLQLVFANIYITHIILL). Cys452 contacts heme.

It belongs to the cytochrome P450 family. Heme serves as cofactor.

The protein localises to the membrane. It catalyses the reaction dehydroprobetaenone I + NADPH + O2 + H(+) = epoxybetaenone + NADP(+) + H2O. The enzyme catalyses dehydroprobetaenone I + 3 NADPH + 3 O2 + 3 H(+) = betaenone C + 3 NADP(+) + 3 H2O. It carries out the reaction probetaenone I + 3 NADPH + 3 O2 + 3 H(+) = betaenone B + 3 NADP(+) + 3 H2O. It participates in mycotoxin biosynthesis. Cytochrome P450 monooxygenase; part of the gene cluster that mediates the biosynthesis of the phytotoxin stemphyloxin II. The first step of the pathway is the synthesis of dehydroprobetaenone I by the polyketide synthase sthA and the enoyl reductase sthE via condensation of one acetyl-CoA starter unit with 7 malonyl-CoA units and 5 methylations. The C-terminal reductase (R) domain of sthA catalyzes the reductive release of the polyketide chain. Because sthA lacks a designated enoylreductase (ER) domain, the required activity is provided the enoyl reductase sthE. The short-chain dehydrogenase/reductase sthC then catalyzes reduction of dehydroprobetaenone I to probetaenone I. The cytochrome P450 monooxygenase sthF catalyzes successive epoxidation, oxidation (resulting from epoxide opening) and hydroxylation to install a tertiary alcohol in the decaline ring to yield betaenone C from dehydroprobetaenone I and betaenone B from probetaenone I. The FAD-linked oxidoreductase sthB is responsible for the conversion of betaenone C to betaenone A via an intramolecular aldol reaction between C-1 and C-17 to form the bridged tricyclic system in betaenone A. Finally, the cytochrome P450 monooxygenase sthD catalyzes the hydroxylation of C-15 to afford the final metabolite stemphyloxin II. The polypeptide is Cytochrome P450 monooxygenase sthF (Phaeosphaeria nodorum (strain SN15 / ATCC MYA-4574 / FGSC 10173) (Glume blotch fungus)).